The chain runs to 707 residues: Kinesin-like protein KIN-13B (707 aa).

One can recognise a Kinesin motor domain in the interval 152–477 (KIKVVVRKRP…LRYADRVKSL (326 aa)). Position 243–250 (243–250 (GQTGSGKT)) interacts with ATP. Residues 619-656 (EHLNELLQEEEDLVSAHRKQVEETLDMIKEEMNLLVEA) adopt a coiled-coil conformation.

Belongs to the TRAFAC class myosin-kinesin ATPase superfamily. Kinesin family. KIN-13 subfamily.

This chain is Kinesin-like protein KIN-13B, found in Oryza sativa subsp. japonica (Rice).